A 211-amino-acid polypeptide reads, in one-letter code: uncharacterized protein (211 aa).

Disordered regions lie at residues 45–74 (RSCG…GALS) and 147–211 (AETR…WEEP). The segment covering 48–71 (GRSSTGGCSPCSGPGPSSPRTSRG) has biased composition (low complexity). Over residues 195–205 (DSGSIKMSENE) the composition is skewed to polar residues.

This is an uncharacterized protein from Homo sapiens (Human).